The sequence spans 190 residues: Cancer-related nucleoside-triphosphatase homolog (190 aa).

Ala-2 carries the post-translational modification N-acetylalanine. Residues 9 to 16 and 109 to 116 contribute to the ATP site; these read GPPGVGKT and ICVIDEVG. Lys-165 is modified (N6-acetyllysine).

Belongs to the THEP1 NTPase family. In terms of assembly, monomer.

It carries out the reaction a ribonucleoside 5'-triphosphate + H2O = a ribonucleoside 5'-diphosphate + phosphate + H(+). The catalysed reaction is 5-methyl-UTP + H2O = 5-methyl-UDP + phosphate + H(+). It catalyses the reaction CTP + H2O = CDP + phosphate + H(+). The enzyme catalyses ATP + H2O = ADP + phosphate + H(+). It carries out the reaction GTP + H2O = GDP + phosphate + H(+). Has nucleotide phosphatase activity towards ATP, GTP, CTP, TTP and UTP. Hydrolyzes nucleoside diphosphates with lower efficiency. This Bos taurus (Bovine) protein is Cancer-related nucleoside-triphosphatase homolog (NTPCR).